The chain runs to 470 residues: Uronate isomerase (470 aa).

The protein belongs to the metallo-dependent hydrolases superfamily. Uronate isomerase family.

It carries out the reaction D-glucuronate = D-fructuronate. The enzyme catalyses aldehydo-D-galacturonate = keto-D-tagaturonate. It functions in the pathway carbohydrate metabolism; pentose and glucuronate interconversion. The polypeptide is Uronate isomerase (Cutibacterium acnes (strain DSM 16379 / KPA171202) (Propionibacterium acnes)).